A 285-amino-acid polypeptide reads, in one-letter code: Secreted alkaline triacylglycerol lipase (285 aa).

An N-terminal signal peptide occupies residues 1 to 20 (MLFNYQSLLVGVSLISQALS). The Nucleophile role is filled by Ser159. Residues Asp215 and His268 each act as charge relay system in the active site.

This sequence belongs to the AB hydrolase superfamily. FaeA family.

The protein resides in the secreted. The catalysed reaction is a triacylglycerol + H2O = a diacylglycerol + a fatty acid + H(+). Functionally, secreted alkaline lipase that hydrolyzes acylglycerol lipids such as triacylglycerols and consequently releases free fatty acid. Is able to hydrolyze tributyrin (1,2,3-tributyryl-glycerin). The protein is Secreted alkaline triacylglycerol lipase of Penicillium cyclopium.